The following is a 290-amino-acid chain: Putative phosphoenolpyruvate synthase regulatory protein (290 aa).

Residue 170–177 (GVSRCGKT) participates in ADP binding.

Belongs to the pyruvate, phosphate/water dikinase regulatory protein family. PSRP subfamily.

It catalyses the reaction [pyruvate, water dikinase] + ADP = [pyruvate, water dikinase]-phosphate + AMP + H(+). The catalysed reaction is [pyruvate, water dikinase]-phosphate + phosphate + H(+) = [pyruvate, water dikinase] + diphosphate. In terms of biological role, bifunctional serine/threonine kinase and phosphorylase involved in the regulation of the phosphoenolpyruvate synthase (PEPS) by catalyzing its phosphorylation/dephosphorylation. This is Putative phosphoenolpyruvate synthase regulatory protein (ydiA) from Enterobacter agglomerans (Erwinia herbicola).